The following is a 1125-amino-acid chain: MCFNLPLPHLPPYLPFITSSFFFFSFFPFSLTNTDAPIEFETTIIDPAEQTSHHVSESRPTHLSFSSSSESPRDQSREQSSRDVSASPVFPKRQQSLLRLDEHMAGGAGESRDEPHGEPSDDAHKSRASSTSSSSSFGQSWNQSSASQRASVSSMGGVDVAQKRPGPSSGGLTGASAASGMPPAPTSQAPAIPPITPQMQTGAFEQYTPQTAPPIPTQSQLGQDGRKRAATLDRQQQYVPSYGYSSPANGERGGPTGGTPGGTPMSPGGVAHVTSPGGGPSAASVHRSFSTTTPHAPTKNSRRIVSTSAAPMRKQIDDANAALGRAVDPSRDSQPMQSRDKRSKSISSRGGMKGVFSNLVSSMGTLSRKNTTVRRSESDTSAPSTPKISGPYDAKHVTHVGFNFDTGEFTGLPKPWQKLLSESGISKVEAEQHPQAVMDIMAFYTDQKDDGVWQKFGGANQAGSGATATTPYNAQNGFSPIASPGATTPTLGALNLGTPLSVDLDTEGDTSTSTGGGGGVGGGDYFAKPRSAPFPPAAGGGSASSSTATLGTGATASGGATTATPAIPSRDRTRESSLSSGTSNQGPPVTPLALSQSRQNLREEAPATPEEKPLAHFVASRKAPRPPSASPKKTGGAGASGDSGAGAAPPSAAPKSPPPRPPPAPPLGVPSVHAPNSEYRQKMITQLEAFNAKRQQERAERHAQKQKLAAAHAQAVQRQQRQQQQQQQQQQQQQSAQQGAMPSVMPQMQHGSMQQAQQSVSGGSSGLTPQQKQLIQQKQLLELQKATGGQVGGPVTSSTQQVLSNPAAAAAASQRKREQRLRKDQQVVARLNQICTPGDPTKLYRNLVKIGQGASGGVFTAYEVGSNLSVAIKQMNLEHQPKKELIINEILVMKDSKHKNIVNFIDSYLHGGDLWVVMEYMEGGSLTDVVTYNMMTESQIGAVCRETLLGLQHLHSKGVIHRDIKSDNVLLSMRGEIKLTDFGFCAQINESNLKRTTMVGTPYWMAPEVVSRKEYGSKVDIWSLGIMSIEMIEGEPPYLNESPLRALYLIATNGTPQLKEPDALSTIFKAFLAWALQVSADQRASASELLKHEFLLTADDVSTLAPLVKAARMAKIQEKNEKAQR.

Disordered stretches follow at residues Gln-50–Ala-394, Thr-498–Arg-680, Lys-693–Gln-771, and Gly-788–Asp-824. Basic and acidic residues-rich tracts occupy residues Thr-51–Pro-60, Ser-71–Ser-81, and Arg-99–Lys-125. The segment covering Ala-128–Ser-154 has biased composition (low complexity). Composition is skewed to polar residues over residues Pro-197–Gln-210 and Asp-233–Ala-248. Over residues Glu-251–Gly-261 the composition is skewed to gly residues. Composition is skewed to polar residues over residues Arg-287 to Ala-309 and Asn-358 to Asn-370. The CRIB domain occupies Ile-388–Gly-401. A compositionally biased stretch (gly residues) spans Thr-514–Asp-524. Over residues Ala-543–Pro-568 the composition is skewed to low complexity. Positions Ser-576–Gln-599 are enriched in polar residues. The segment covering Asn-600–Leu-614 has biased composition (basic and acidic residues). A compositionally biased stretch (gly residues) spans Gly-635–Gly-644. Over residues Ser-651–Gly-668 the composition is skewed to pro residues. Positions Arg-694–Ala-703 are enriched in basic and acidic residues. 2 stretches are compositionally biased toward low complexity: residues Gln-706–Gln-738 and Gln-747–Gly-762. The span at Val-795–Ser-804 shows a compositional bias: polar residues. The 252-residue stretch at Tyr-844 to Leu-1095 folds into the Protein kinase domain. ATP contacts are provided by residues Ile-850–Val-858 and Lys-873. The active-site Proton acceptor is the Asp-963.

It belongs to the protein kinase superfamily. STE Ser/Thr protein kinase family. STE20 subfamily.

It localises to the cytoplasm. It is found in the nucleus. It carries out the reaction L-seryl-[protein] + ATP = O-phospho-L-seryl-[protein] + ADP + H(+). The enzyme catalyses L-threonyl-[protein] + ATP = O-phospho-L-threonyl-[protein] + ADP + H(+). Functionally, MAP4K component of the MAPK pathway required for the mating pheromone response and the regulation of cell polarity and cell cycle. The chain is Serine/threonine-protein kinase STE20 (STE20) from Yarrowia lipolytica (strain CLIB 122 / E 150) (Yeast).